The chain runs to 102 residues: NADH-quinone oxidoreductase subunit K (102 aa).

The next 3 membrane-spanning stretches (helical) occupy residues 6–26, 30–50, and 62–82; these read LEHG…GLMV, ILFV…AFVV, and VMFI…LAIL.

The protein belongs to the complex I subunit 4L family. As to quaternary structure, NDH-1 is composed of 13 different subunits. Subunits NuoA, H, J, K, L, M, N constitute the membrane sector of the complex.

It is found in the cell inner membrane. It carries out the reaction a quinone + NADH + 5 H(+)(in) = a quinol + NAD(+) + 4 H(+)(out). Functionally, NDH-1 shuttles electrons from NADH, via FMN and iron-sulfur (Fe-S) centers, to quinones in the respiratory chain. The immediate electron acceptor for the enzyme in this species is believed to be ubiquinone. Couples the redox reaction to proton translocation (for every two electrons transferred, four hydrogen ions are translocated across the cytoplasmic membrane), and thus conserves the redox energy in a proton gradient. The protein is NADH-quinone oxidoreductase subunit K of Pseudomonas aeruginosa (strain LESB58).